A 474-amino-acid polypeptide reads, in one-letter code: Trehalose-6-phosphate synthase (474 aa).

R10 is a binding site for D-glucose 6-phosphate. Residue 22–23 coordinates UDP-alpha-D-glucose; that stretch reads GG. D-glucose 6-phosphate-binding residues include Y77 and D131. Residues R263 and K268 each contribute to the UDP-alpha-D-glucose site. A D-glucose 6-phosphate-binding site is contributed by R301. Residues F340 and 366-370 each bind UDP-alpha-D-glucose; that span reads LVAKE.

The protein belongs to the glycosyltransferase 20 family. Homotetramer.

The catalysed reaction is D-glucose 6-phosphate + UDP-alpha-D-glucose = alpha,alpha-trehalose 6-phosphate + UDP + H(+). Its pathway is glycan biosynthesis; trehalose biosynthesis. Functionally, probably involved in the osmoprotection via the biosynthesis of trehalose. Catalyzes the transfer of glucose from UDP-alpha-D-glucose (UDP-Glc) to D-glucose 6-phosphate (Glc-6-P) to form trehalose-6-phosphate. Acts with retention of the anomeric configuration of the UDP-sugar donor. The polypeptide is Trehalose-6-phosphate synthase (Pseudomonas savastanoi (Pseudomonas syringae pv. savastanoi)).